Consider the following 340-residue polypeptide: Manganese-dependent ADP-ribose/CDP-alcohol diphosphatase (340 aa).

M1 is modified (N-acetylmethionine). Residues D25, Q27, D74, N110, H241, H278, and H280 each coordinate Zn(2+).

It belongs to the ADPRibase-Mn family. As to quaternary structure, monomer. Mg(2+) is required as a cofactor.

It carries out the reaction CDP-choline + H2O = phosphocholine + CMP + 2 H(+). It catalyses the reaction ADP-D-ribose + H2O = D-ribose 5-phosphate + AMP + 2 H(+). The catalysed reaction is CDP-glycerol + H2O = sn-glycerol 3-phosphate + CMP + 2 H(+). Functionally, hydrolyzes ADP-ribose, IDP-ribose, CDP-glycerol, CDP-choline and CDP-ethanolamine, but not other non-reducing ADP-sugars or CDP-glucose. May be involved in immune cell signaling as suggested by the second-messenger role of ADP-ribose, which activates TRPM2 as a mediator of oxidative/nitrosative stress. The protein is Manganese-dependent ADP-ribose/CDP-alcohol diphosphatase (Adprm) of Mus musculus (Mouse).